Here is a 280-residue protein sequence, read N- to C-terminus: Undecaprenyl-diphosphatase (280 aa).

The next 7 membrane-spanning stretches (helical) occupy residues 1 to 21 (MTLL…PFPV), 45 to 65 (FLPF…GVFW), 90 to 110 (IFGL…LLEH), 115 to 135 (VFGT…LLMV), 151 to 171 (IATL…LALL), 226 to 246 (IMVQ…ICSL), and 260 to 280 (LTPF…VILL).

Belongs to the UppP family.

The protein localises to the cell inner membrane. It catalyses the reaction di-trans,octa-cis-undecaprenyl diphosphate + H2O = di-trans,octa-cis-undecaprenyl phosphate + phosphate + H(+). Its function is as follows. Catalyzes the dephosphorylation of undecaprenyl diphosphate (UPP). Confers resistance to bacitracin. The chain is Undecaprenyl-diphosphatase from Gluconobacter oxydans (strain 621H) (Gluconobacter suboxydans).